The sequence spans 320 residues: Nicotianamine synthase 2 (320 aa).

It belongs to the nicotianamine synthase (NAS)-like family.

The catalysed reaction is 3 S-adenosyl-L-methionine = nicotianamine + 3 S-methyl-5'-thioadenosine + 3 H(+). Functionally, synthesizes nicotianamine, a polyamine which serves as a sensor for the physiological iron status within the plant, and/or might be involved in the transport of iron. The chain is Nicotianamine synthase 2 (NAS2) from Arabidopsis thaliana (Mouse-ear cress).